The following is a 96-amino-acid chain: MRDPRDIIKRPVITERSMEMMAEKKYTFDVDVKSNKTEVKDAIEAIFGVNVDKVNIMNYKPKAKRVGRHAGFTSRRRKAIVKLTADSKEIEIFQGV.

The protein belongs to the universal ribosomal protein uL23 family. As to quaternary structure, part of the 50S ribosomal subunit. Contacts protein L29, and trigger factor when it is bound to the ribosome.

In terms of biological role, one of the early assembly proteins it binds 23S rRNA. One of the proteins that surrounds the polypeptide exit tunnel on the outside of the ribosome. Forms the main docking site for trigger factor binding to the ribosome. The sequence is that of Large ribosomal subunit protein uL23 from Bacillus mycoides (strain KBAB4) (Bacillus weihenstephanensis).